The following is a 126-amino-acid chain: Small ribosomal subunit protein uS12 (126 aa).

A disordered region spans residues 1–26 (MPTINQLVRKGRASETTKSKSPALQD). Asp89 is subject to 3-methylthioaspartic acid. Positions 101-126 (SLDTQGVKDRKQARSKYGAKRAKAAK) are disordered. Residues 113 to 126 (ARSKYGAKRAKAAK) show a composition bias toward basic residues.

It belongs to the universal ribosomal protein uS12 family. In terms of assembly, part of the 30S ribosomal subunit. Contacts proteins S8 and S17. May interact with IF1 in the 30S initiation complex.

With S4 and S5 plays an important role in translational accuracy. In terms of biological role, interacts with and stabilizes bases of the 16S rRNA that are involved in tRNA selection in the A site and with the mRNA backbone. Located at the interface of the 30S and 50S subunits, it traverses the body of the 30S subunit contacting proteins on the other side and probably holding the rRNA structure together. The combined cluster of proteins S8, S12 and S17 appears to hold together the shoulder and platform of the 30S subunit. This chain is Small ribosomal subunit protein uS12, found in Burkholderia pseudomallei (strain 1106a).